Here is a 258-residue protein sequence, read N- to C-terminus: Ribosomal RNA small subunit methyltransferase J (258 aa).

Residues 111-112 (RD), 127-128 (ER), and Asp-179 each bind S-adenosyl-L-methionine.

It belongs to the methyltransferase superfamily. RsmJ family.

The protein resides in the cytoplasm. It carries out the reaction guanosine(1516) in 16S rRNA + S-adenosyl-L-methionine = N(2)-methylguanosine(1516) in 16S rRNA + S-adenosyl-L-homocysteine + H(+). In terms of biological role, specifically methylates the guanosine in position 1516 of 16S rRNA. The polypeptide is Ribosomal RNA small subunit methyltransferase J (Alteromonas mediterranea (strain DSM 17117 / CIP 110805 / LMG 28347 / Deep ecotype)).